A 377-amino-acid polypeptide reads, in one-letter code: Putative F-box only protein 10 (377 aa).

The F-box domain occupies 1-46 (MVSVNLPWELVEEILYRVPPQSLARFRTVCKQWNSLFDDNKFVNDH).

This is Putative F-box only protein 10 (FBX10) from Arabidopsis thaliana (Mouse-ear cress).